The primary structure comprises 581 residues: Leucine-rich repeat-containing protein 47 (581 aa).

7 LRR repeats span residues 78-97 (QLHS…SPEL), 102-123 (ALRV…EGLG), 132-154 (QLQS…ARCA), 156-177 (RLQS…LFRP), 182-204 (LLSE…AHLA), 205-227 (SLKT…ADCP), and 228-248 (KLKE…EKMV). The disordered stretch occupies residues 262 to 301 (AGGRGGRSKGRQEASEKEDRKKRRERKQHRESGEGEEEVA). The span at 271 to 280 (GRQEASEKED) shows a compositional bias: basic and acidic residues. A phosphoserine mark is found at Ser314, Ser430, and Ser519. The stretch at 401–436 (LGRKEAKAKELVRQLQLEAEEQRKQKKRQSVSGLHR) forms a coiled coil.

The chain is Leucine-rich repeat-containing protein 47 (Lrrc47) from Mus musculus (Mouse).